Here is a 63-residue protein sequence, read N- to C-terminus: Large ribosomal subunit protein uL30 (63 aa).

It belongs to the universal ribosomal protein uL30 family. As to quaternary structure, part of the 50S ribosomal subunit.

This chain is Large ribosomal subunit protein uL30, found in Xylella fastidiosa (strain 9a5c).